Here is a 618-residue protein sequence, read N- to C-terminus: Cell pattern formation-associated protein STU1 (618 aa).

The span at 13 to 28 (MSAGPTQQPPTVTSYN) shows a compositional bias: polar residues. The segment at 13–105 (MSAGPTQQPP…FDTSGQIAPP (93 aa)) is disordered. Low complexity predominate over residues 48 to 59 (YGGYPYTNGMPS). Over residues 91 to 101 (NQYSGFDTSGQ) the composition is skewed to polar residues. The HTH APSES-type domain occupies 110-216 (RVTATLWEDE…HNISALLYHP (107 aa)). A DNA-binding region (H-T-H motif) is located at residues 144–165 (GTKLLNVAGMTRGRRDGILKSE). Disordered stretches follow at residues 229 to 355 (AERR…YDGS) and 390 to 618 (SEMG…SRRR). Composition is skewed to polar residues over residues 256–266 (MSQNGSQSLSG), 284–298 (TSASSAVNMGSSDSF), 305–326 (AMSNGQQNPMSIDTSLSNTRSM), and 336–355 (GSTLQSMQAYPPASQSYDGS). Basic and acidic residues predominate over residues 438-451 (DHEHDPEYTHDSRT). Residues 452-476 (YDNSQSQYNYTAPPVSSISSEQAHV) are compositionally biased toward polar residues. Over residues 494-512 (PRSAAAPQAYYQQAYSTSP) the composition is skewed to low complexity. The segment covering 513–563 (RSATHQSTSNLYNVMSNDRGSTTNGSANGDVYSQSTDLSNGYATPVTNGNA) has biased composition (polar residues). The segment at 566–588 (KRGRDDDDDRSSSSGQMDLKRRK) is nuclear localization domain.

Belongs to the EFG1/PHD1/stuA family.

The protein resides in the nucleus. Its function is as follows. Transcription factor that regulates asexual reproduction. Binds the StuA-response elements (StRE) with the consensus sequence 5'-(A/T)CGCG(T/A)N(A/C)-3' at the promoters of target genes. Required for appressorium-mediated infection of rice leaves due to its involvement in the mobilization of lipids and glycogen. In Pyricularia oryzae (strain 70-15 / ATCC MYA-4617 / FGSC 8958) (Rice blast fungus), this protein is Cell pattern formation-associated protein STU1.